Here is a 257-residue protein sequence, read N- to C-terminus: Type III pantothenate kinase (257 aa).

ATP is bound at residue 6–13; it reads DVGNTNTV. Residues Y100 and 107-110 contribute to the substrate site; that span reads GADR. The Proton acceptor role is filled by D109. D129 provides a ligand contact to K(+). T132 provides a ligand contact to ATP. T185 contacts substrate.

It belongs to the type III pantothenate kinase family. As to quaternary structure, homodimer. The cofactor is NH4(+). Requires K(+) as cofactor.

The protein localises to the cytoplasm. It catalyses the reaction (R)-pantothenate + ATP = (R)-4'-phosphopantothenate + ADP + H(+). It functions in the pathway cofactor biosynthesis; coenzyme A biosynthesis; CoA from (R)-pantothenate: step 1/5. Catalyzes the phosphorylation of pantothenate (Pan), the first step in CoA biosynthesis. This Desulfatibacillum aliphaticivorans protein is Type III pantothenate kinase.